The chain runs to 830 residues: MFFKNDSDRGKNAPERGIVPLLPLRDIIVFPHMVSQLFVGRERSIAALDEAMNRGKEIFLAAQRNAKTNDPTPDDIFGVGSVGAIMQLLRLPDGTVKVLIEGKRRARIRRYVQSDAYFLIEYDEIVESSVASVEVEALMRSVQSTFEMYVKLNKKIQPEVLMAVQAIDEASRLADTIIANLPTIKLTDRQALLEMEEPQKRLERLIELMQAEIEILQVEKKIRSRVKKQMEKTQKEYYLNEQMQAIQKELGGGERDEFKNEIQEIEEALKTKRMSKEAAAKVKKELKKLKMMHPTSAEATVVRNYIDWILELPWYDKSEERYDLVEAERILDEDHYGLKKIKERILEYLAVQALTKKLKGPVLCFVGPPGVGKTSLAKSIARATGRKFVRLSLGGVRDEAEIRGHRRTYIGALPGKLIQSLKKVGTNNPVFLLDEVDKMSTDFRGDPAAALLEVLDPEQNHTFNDHYLDLDYDLSDVMFITTANTLSGIPVPLQDRMEVIQLSGYTEFEKLNIAVKYLVPRQRKECGLEDVSLDFTEGALRTIIHHYTKESGVRSLEREIASVCRKVARRVVSDGKEKPIEVVAKSIPKYLGVPKYRLGRREERDEVGLVNGLAVTNVGGDLLPAEATVVPGKGKLVITGLLEKGMEESGHAAMSYVRSRLDRLGLEADVYQKVDVHIHFPDFVRKDGPSAGVTMVTALVSSLMKVPVRRDLAMTGEITLRGRVMPIGGLKEKLLAAHRGGIATVILPKENRKDLRDVPRRVLKALRLVLVEHVDDVLREALILPDAYAIFGPPKGVLEYRDGELVTEAAPVKAPPAAAGEPTPAAPPGA.

One can recognise a Lon N-terminal domain in the interval 19-213 (VPLLPLRDII…RLIELMQAEI (195 aa)). 367-374 (GPPGVGKT) lines the ATP pocket. Residues 604-784 (RDEVGLVNGL…DDVLREALIL (181 aa)) enclose the Lon proteolytic domain. Residues Ser-690 and Lys-733 contribute to the active site. The span at 811-823 (PVKAPPAAAGEPT) shows a compositional bias: low complexity. Residues 811 to 830 (PVKAPPAAAGEPTPAAPPGA) are disordered.

Belongs to the peptidase S16 family. As to quaternary structure, homohexamer. Organized in a ring with a central cavity.

The protein resides in the cytoplasm. It carries out the reaction Hydrolysis of proteins in presence of ATP.. ATP-dependent serine protease that mediates the selective degradation of mutant and abnormal proteins as well as certain short-lived regulatory proteins. Required for cellular homeostasis and for survival from DNA damage and developmental changes induced by stress. Degrades polypeptides processively to yield small peptide fragments that are 5 to 10 amino acids long. Binds to DNA in a double-stranded, site-specific manner. The chain is Lon protease 3 from Sorangium cellulosum (strain So ce56) (Polyangium cellulosum (strain So ce56)).